Consider the following 492-residue polypeptide: Heat shock factor protein 4 (492 aa).

Residues 17 to 122 (VPAFLGKLWA…LLERVRRKVP (106 aa)) mediate DNA binding. The hydrophobic repeat HR-A/B stretch occupies residues 129-203 (SRWRPEDLSR…GPLQTGPSST (75 aa)). The interval 245 to 322 (LPETTLGLSP…ECDFCVTAPP (78 aa)) is interactions with DUSP26, MAPK1 and MAPK2. A disordered region spans residues 263–282 (SDIPEDSPSPEGHRLSPSGG). Lys-293 is covalently cross-linked (Glycyl lysine isopeptide (Lys-Gly) (interchain with G-Cter in SUMO)). At Ser-298 the chain carries Phosphoserine. The disordered stretch occupies residues 337–378 (GSYSPEGPRSVQQPEPRGPREVPDRGTLGLDRGNRSPESLLP). A hydrophobic repeat HR-C region spans residues 364-389 (LGLDRGNRSPESLLPPMLLRPAPETL).

This sequence belongs to the HSF family. Homotrimer. Exhibits constitutive DNA binding and forms trimers even in the absence of stress. Interacts with ALKBH4, DUSP26, MAPK1, MAPK2, MAPK8 and MAP kinase p38. In terms of processing, phosphorylated mainly on serine residues. Phosphorylation on Ser-298 promotes sumoylation on Lys-293. Isoform HSF4B is constitutively sumoylated. Sumoylation represses the transcriptional activity and is promoted by phosphorylation on Ser-298. HSFA is not sumoylated. Preferentially expressed in brain and lung. Also found in the eye. Slightly detected in liver and skeletal muscle. Isoform B is the major species in various tissues.

It localises to the nucleus. Heat-shock transcription factor that specifically binds heat shock promoter elements (HSE). Required for denucleation and organelle rupture and degradation that occur during eye lens terminal differentiation, when fiber cells that compose the lens degrade all membrane-bound organelles in order to provide lens with transparency to allow the passage of light. In this process, may regulate denucleation of lens fiber cells in part by activating DNASE2B transcription. May be involved in DNA repair through the transcriptional regulation of RAD51. May up-regulate p53/TP53 protein in eye lens fiber cells, possibly through protein stabilization. In the eye lens, controls the expression of alpha-crystallin B chain/CRYAB and consequently may be involved in the regulation of lysosomal acidification. In terms of biological role, transcriptional repressor. Functionally, transcriptional activator. The protein is Heat shock factor protein 4 (Hsf4) of Mus musculus (Mouse).